The chain runs to 183 residues: UPF0200 protein MMP1282 (183 aa).

8–15 serves as a coordination point for ATP; it reads GMPGSGKS.

Belongs to the UPF0200 family.

The protein is UPF0200 protein MMP1282 of Methanococcus maripaludis (strain DSM 14266 / JCM 13030 / NBRC 101832 / S2 / LL).